The chain runs to 408 residues: RNA exonuclease 4 (408 aa).

Residues 27–70 (TKEKDVSNSKAHNSRSSQSPSSSLRSSSRIQRKSKHSQGVGQYM) are disordered. Positions 40-55 (SRSSQSPSSSLRSSSR) are enriched in low complexity. The Exonuclease domain maps to 131 to 292 (QYLAIDCEMV…YRLHKKEWER (162 aa)). Residues 310-322 (PEHVLGKRGHDEK) are compositionally biased toward basic and acidic residues. Residues 310 to 408 (PEHVLGKRGH…GESWWEQPAA (99 aa)) form a disordered region. Positions 343-357 (GNGGGRQQFPGGGRK) are enriched in gly residues. Residues 372–384 (QRVDENGRGDGTS) are compositionally biased toward basic and acidic residues.

It belongs to the REXO4 family.

It localises to the nucleus. Its function is as follows. Exoribonuclease involved in ribosome biosynthesis. Involved in the processing of ITS1, the internal transcribed spacer localized between the 18S and 5.8S rRNAs. The protein is RNA exonuclease 4 (REX4) of Cryptococcus neoformans var. neoformans serotype D (strain B-3501A) (Filobasidiella neoformans).